We begin with the raw amino-acid sequence, 423 residues long: NDP-N-acetyl-D-galactosaminuronic acid dehydrogenase (423 aa).

Position 11-28 (11-28 (TISVVGLGYIGLPTATVL)) interacts with NAD(+). Residue lysine 218 is the Proton donor/acceptor of the active site. Residue cysteine 272 is the Nucleophile of the active site.

This sequence belongs to the UDP-glucose/GDP-mannose dehydrogenase family.

Its function is as follows. Probably involved in synthesis of sugar components of EPS I, by converting NDP-N-acetyl-D-galactosamine into NDP-N-acetyl-D-galactosaminuronic acid. The chain is NDP-N-acetyl-D-galactosaminuronic acid dehydrogenase (epsD) from Ralstonia solanacearum (Pseudomonas solanacearum).